We begin with the raw amino-acid sequence, 291 residues long: MHFQDVILTLQNFWAKRGCVIMQPIDVECGAGTFNPSTFLRVIGPEPWNVAYVEPSRRPTDGRYGENPNRLQHYFQFQVILKPSPDNVQDIYLDSLRALGIDPAAHDIRFVEDDWESPTLGAWGLGWEVWLNGMEVTQFTYFQQVGGIDLAPTSVEITYGLERLCMYLQGKESVYDLSWNDRVTYGNIYHQNEVEQSKYNFEASNPKMLLDQFNACEAECKRLCDEGLLWPAYDYCLKCSHTFNLLDARGAISITERTGYIGRVRALASAVARLYAVQREELGYPMLASAR.

It belongs to the class-II aminoacyl-tRNA synthetase family. As to quaternary structure, tetramer of two alpha and two beta subunits.

The protein localises to the cytoplasm. It carries out the reaction tRNA(Gly) + glycine + ATP = glycyl-tRNA(Gly) + AMP + diphosphate. This chain is Glycine--tRNA ligase alpha subunit, found in Nitratidesulfovibrio vulgaris (strain DSM 19637 / Miyazaki F) (Desulfovibrio vulgaris).